Consider the following 103-residue polypeptide: Pyrimidine/purine nucleoside phosphorylase (103 aa).

Belongs to the nucleoside phosphorylase PpnP family.

The catalysed reaction is a purine D-ribonucleoside + phosphate = a purine nucleobase + alpha-D-ribose 1-phosphate. It carries out the reaction adenosine + phosphate = alpha-D-ribose 1-phosphate + adenine. The enzyme catalyses cytidine + phosphate = cytosine + alpha-D-ribose 1-phosphate. It catalyses the reaction guanosine + phosphate = alpha-D-ribose 1-phosphate + guanine. The catalysed reaction is inosine + phosphate = alpha-D-ribose 1-phosphate + hypoxanthine. It carries out the reaction thymidine + phosphate = 2-deoxy-alpha-D-ribose 1-phosphate + thymine. The enzyme catalyses uridine + phosphate = alpha-D-ribose 1-phosphate + uracil. It catalyses the reaction xanthosine + phosphate = alpha-D-ribose 1-phosphate + xanthine. Its function is as follows. Catalyzes the phosphorolysis of diverse nucleosides, yielding D-ribose 1-phosphate and the respective free bases. Can use uridine, adenosine, guanosine, cytidine, thymidine, inosine and xanthosine as substrates. Also catalyzes the reverse reactions. This chain is Pyrimidine/purine nucleoside phosphorylase, found in Shewanella putrefaciens (strain CN-32 / ATCC BAA-453).